A 118-amino-acid chain; its full sequence is Succinate dehydrogenase assembly factor 1, mitochondrial (118 aa).

The short motif at 14-16 (LYR) is the LYR motif 1; required for interaction with HSC20 element. An LYR motif 2; not required for interaction with HSC20 motif is present at residues 53-55 (LYR). The interaction with SDHB stretch occupies residues 53 to 65 (LYRRGRRQLQMLR). Positions 72 to 118 (MGAFVRTRGPTEESNGAGAPGTLSGEGDDPRKPLDSMRTPKTPLDGR) are disordered.

It belongs to the complex I LYR family. SDHAF1 subfamily. In terms of assembly, interacts with SDHB within an SDHA-SDHB subcomplex. Also interacts with the iron-sulfur transfer complex formed by HSC20, HSPA9 and ISCU through direct binding to HSC20. Binding of SDHAF1 to SDHB precedes and is necessary for recruitment of the iron-sulfur transfer complex by SDHAF1.

It localises to the mitochondrion matrix. In terms of biological role, plays an essential role in the assembly of succinate dehydrogenase (SDH), an enzyme complex (also referred to as respiratory complex II) that is a component of both the tricarboxylic acid (TCA) cycle and the mitochondrial electron transport chain, and which couples the oxidation of succinate to fumarate with the reduction of ubiquinone (coenzyme Q) to ubiquinol. Promotes maturation of the iron-sulfur protein subunit SDHB of the SDH catalytic dimer, protecting it from the deleterious effects of oxidants. May act together with SDHAF3. Contributes to iron-sulfur cluster incorporation into SDHB by binding to SDHB and recruiting the iron-sulfur transfer complex formed by HSC20, HSPA9 and ISCU through direct binding to HSC20. The protein is Succinate dehydrogenase assembly factor 1, mitochondrial of Bos taurus (Bovine).